Consider the following 343-residue polypeptide: CRISPR-associated endonuclease Cas1 1 (343 aa).

Positions 166, 234, and 249 each coordinate Mn(2+).

Belongs to the CRISPR-associated endonuclease Cas1 family. As to quaternary structure, homodimer, forms a heterotetramer with a Cas2 homodimer. Requires Mg(2+) as cofactor. Mn(2+) is required as a cofactor.

CRISPR (clustered regularly interspaced short palindromic repeat), is an adaptive immune system that provides protection against mobile genetic elements (viruses, transposable elements and conjugative plasmids). CRISPR clusters contain spacers, sequences complementary to antecedent mobile elements, and target invading nucleic acids. CRISPR clusters are transcribed and processed into CRISPR RNA (crRNA). Acts as a dsDNA endonuclease. Involved in the integration of spacer DNA into the CRISPR cassette. The protein is CRISPR-associated endonuclease Cas1 1 of Moorella thermoacetica (strain ATCC 39073 / JCM 9320).